The primary structure comprises 443 residues: Protein king tubby (443 aa).

Disordered regions lie at residues 57-80 (TNGS…NNMR) and 98-191 (HELE…EGDV). Residues 67–80 (VAMNTSRNHSNNMR) show a composition bias toward polar residues. Residues 113 to 128 (QQQQSASHSANSTQSQ) show a composition bias toward low complexity. Serine 136 carries the phosphoserine modification. A compositionally biased stretch (gly residues) spans 177–186 (NGTGNGTGGE).

The protein belongs to the TUB family.

The protein localises to the cytoplasm. It is found in the nucleus. The protein resides in the cell projection. It localises to the cilium membrane. Its subcellular location is the rhabdomere. The chain is Protein king tubby from Drosophila sechellia (Fruit fly).